Reading from the N-terminus, the 108-residue chain is Cyclin-dependent protein kinase inhibitor SMR13 (108 aa).

Functionally, probable cyclin-dependent protein kinase (CDK) inhibitor that functions as a repressor of mitosis in the endoreduplication cell cycle. The protein is Cyclin-dependent protein kinase inhibitor SMR13 of Arabidopsis thaliana (Mouse-ear cress).